The chain runs to 145 residues: 3-hydroxyacyl-[acyl-carrier-protein] dehydratase FabZ (145 aa).

Residue His-50 is part of the active site.

It belongs to the thioester dehydratase family. FabZ subfamily.

It is found in the cytoplasm. It catalyses the reaction a (3R)-hydroxyacyl-[ACP] = a (2E)-enoyl-[ACP] + H2O. Functionally, involved in unsaturated fatty acids biosynthesis. Catalyzes the dehydration of short chain beta-hydroxyacyl-ACPs and long chain saturated and unsaturated beta-hydroxyacyl-ACPs. The chain is 3-hydroxyacyl-[acyl-carrier-protein] dehydratase FabZ from Coxiella burnetii (strain CbuK_Q154) (Coxiella burnetii (strain Q154)).